A 422-amino-acid polypeptide reads, in one-letter code: Bifunctional enzyme IspD/IspF (422 aa).

A 2-C-methyl-D-erythritol 4-phosphate cytidylyltransferase region spans residues 1-267 (MAVGLLLLAA…PISALSMPLP (267 aa)). Positions 268–422 (LIGVGIDFHK…AIAVAQIYHR (155 aa)) are 2-C-methyl-D-erythritol 2,4-cyclodiphosphate synthase. A divalent metal cation contacts are provided by D274 and H276. 4-CDP-2-C-methyl-D-erythritol 2-phosphate contacts are provided by residues 274 to 276 (DFH) and 301 to 302 (HS). Residue H309 coordinates a divalent metal cation. 4-CDP-2-C-methyl-D-erythritol 2-phosphate contacts are provided by residues 323–325 (DIG), F404, and R407.

This sequence in the N-terminal section; belongs to the IspD/TarI cytidylyltransferase family. IspD subfamily. In the C-terminal section; belongs to the IspF family. It depends on a divalent metal cation as a cofactor.

The enzyme catalyses 2-C-methyl-D-erythritol 4-phosphate + CTP + H(+) = 4-CDP-2-C-methyl-D-erythritol + diphosphate. It carries out the reaction 4-CDP-2-C-methyl-D-erythritol 2-phosphate = 2-C-methyl-D-erythritol 2,4-cyclic diphosphate + CMP. Its pathway is isoprenoid biosynthesis; isopentenyl diphosphate biosynthesis via DXP pathway; isopentenyl diphosphate from 1-deoxy-D-xylulose 5-phosphate: step 2/6. It participates in isoprenoid biosynthesis; isopentenyl diphosphate biosynthesis via DXP pathway; isopentenyl diphosphate from 1-deoxy-D-xylulose 5-phosphate: step 4/6. Functionally, bifunctional enzyme that catalyzes the formation of 4-diphosphocytidyl-2-C-methyl-D-erythritol from CTP and 2-C-methyl-D-erythritol 4-phosphate (MEP) (IspD), and catalyzes the conversion of 4-diphosphocytidyl-2-C-methyl-D-erythritol 2-phosphate (CDP-ME2P) to 2-C-methyl-D-erythritol 2,4-cyclodiphosphate (ME-CPP) with a corresponding release of cytidine 5-monophosphate (CMP) (IspF). This Tropheryma whipplei (strain TW08/27) (Whipple's bacillus) protein is Bifunctional enzyme IspD/IspF.